We begin with the raw amino-acid sequence, 139 residues long: Thiosulfate:glutathione sulfurtransferase (139 aa).

A Phosphoserine modification is found at Ser-26. One can recognise a Rhodanese domain in the interval 37 to 138 (HDPNVVLVDV…WVSHGGDKLD (102 aa)). Cys-98 acts as the Cysteine persulfide intermediate in catalysis.

The protein localises to the mitochondrion. It catalyses the reaction thiosulfate + glutathione = S-sulfanylglutathione + sulfite + H(+). With respect to regulation, GSS(-) is a potent inhibitor of RDL1, since the presence of the sulfur dioxygenase strongly increases the RDL1 catalytic activity. Thiosulfate:glutathione sulfurtransferase (TST) required to produce S-sulfanylglutathione (GSS(-)), a central intermediate in hydrogen sulfide metabolism. Provides the link between the first step in H(2)S metabolism performed by the sulfide:quinone oxidoreductase (SQOR) which catalyzes the conversion of H(2)S to thiosulfate, and the sulfur dioxygenase (SDO) which uses GSS(-) as substrate. The thermodynamic coupling of the irreversible SDO and reversible TST reactions provides a model for the physiologically relevant reaction with thiosulfate as the sulfane donor. The sequence is that of Thiosulfate:glutathione sulfurtransferase (RDL1) from Saccharomyces cerevisiae (strain ATCC 204508 / S288c) (Baker's yeast).